Here is a 234-residue protein sequence, read N- to C-terminus: Gem-associated protein 8 (234 aa).

The tract at residues Leu-60–Ser-116 is disordered. The span at Lys-67–Gly-83 shows a compositional bias: low complexity. A compositionally biased stretch (basic and acidic residues) spans Arg-100–Glu-110. Positions Ile-130 to Gln-153 form a coiled coil.

Part of the core SMN complex that contains SMN1, GEMIN2/SIP1, DDX20/GEMIN3, GEMIN4, GEMIN5, GEMIN6, GEMIN7, GEMIN8 and STRAP/UNRIP. Part of the SMN-Sm complex that contains SMN1, GEMIN2/SIP1, DDX20/GEMIN3, GEMIN4, GEMIN5, GEMIN6, GEMIN7, GEMIN8, STRAP/UNRIP and the Sm proteins SNRPB, SNRPD1, SNRPD2, SNRPD3, SNRPE, SNRPF and SNRPG. Interacts with GEMIN6; the interaction is direct. Interacts with GEMIN7; the interaction is direct. Interacts with SMN1; the interaction is direct. Interacts with GEMIN4; the interaction is direct.

The protein resides in the nucleus. It localises to the gem. It is found in the cytoplasm. In terms of biological role, the SMN complex catalyzes the assembly of small nuclear ribonucleoproteins (snRNPs), the building blocks of the spliceosome, and thereby plays an important role in the splicing of cellular pre-mRNAs. Most spliceosomal snRNPs contain a common set of Sm proteins SNRPB, SNRPD1, SNRPD2, SNRPD3, SNRPE, SNRPF and SNRPG that assemble in a heptameric protein ring on the Sm site of the small nuclear RNA to form the core snRNP (Sm core). In the cytosol, the Sm proteins SNRPD1, SNRPD2, SNRPE, SNRPF and SNRPG are trapped in an inactive 6S pICln-Sm complex by the chaperone CLNS1A that controls the assembly of the core snRNP. To assemble core snRNPs, the SMN complex accepts the trapped 5Sm proteins from CLNS1A forming an intermediate. Binding of snRNA inside 5Sm triggers eviction of the SMN complex, thereby allowing binding of SNRPD3 and SNRPB to complete assembly of the core snRNP. In Bos taurus (Bovine), this protein is Gem-associated protein 8 (GEMIN8).